The sequence spans 178 residues: Large ribosomal subunit protein uL5 (178 aa).

Belongs to the universal ribosomal protein uL5 family. As to quaternary structure, part of the 50S ribosomal subunit; part of the 5S rRNA/L5/L18/L25 subcomplex. Contacts the 5S rRNA and the P site tRNA. Forms a bridge to the 30S subunit in the 70S ribosome.

Its function is as follows. This is one of the proteins that bind and probably mediate the attachment of the 5S RNA into the large ribosomal subunit, where it forms part of the central protuberance. In the 70S ribosome it contacts protein S13 of the 30S subunit (bridge B1b), connecting the 2 subunits; this bridge is implicated in subunit movement. Contacts the P site tRNA; the 5S rRNA and some of its associated proteins might help stabilize positioning of ribosome-bound tRNAs. The polypeptide is Large ribosomal subunit protein uL5 (Wigglesworthia glossinidia brevipalpis).